The primary structure comprises 2157 residues: MGAQVSRQNVGTHSTQNSVSNGSSLNYFNINYFKDAASSGASRLDFSQDPSKFTDPVKDVLEKGIPTLQSPSVEACGYSDRIMQITRGDSTITSQDVANAVVGYGVWPHYLTPQDATAIDKPTQPDTSSNRFYTLESKHWNGSSKGWWWKLPDALKDMGIFGENMYYHFLGRSGYTVHVQCNASKFHQGTLLVAMIPEHQLASAKHGSVTAGYKLTHPGEAGRDVSQERDASLRQPSDDSWLNFDGTLLGNLLIFPHQFINLRSNNSATLIVPYVNAVPMDSMLRHNNWSLVIIPISPLRSETTSSNIVPITVSISPMCAEFSGARAKNIKQGLPVYITPGSGQFMTTDDMQSPCALPWYHPTKEISIPGEVKNLIEMCQVDTLIPVNNVGNNVGNVSMYTVQLGNQTGMAQKVFSIKVDITSQPLATTLIGEIASYYTHWTGSLRFSFMFCGTANTTLKLLLAYTPPGIDEPTTRKDAMLGTHVVWDVGLQSTISLVVPWVSASHFRLTADNKYSMAGYITCWYQTNLVVPPSTPQTADMLCFVSACKDFCLRMARDTDLHIQSGPIEQNPVENYIDEVLNEVLVVPNIKESHHTTSNSAPLLDAAETGHTSNVQPEDAIETRYVITSQTRDEMSIESFLGRSGCVHISRIKVDYTDYNGQDINFTKWKITLQEMAQIRRKFELFTYVRFDSEITLVPCIAGRGDDIGHIVMQYMYVPPGAPIPSKRNDFSWQSGTNMSIFWQHGQPFPRFSLPFLSIASAYYMFYDGYDGDNTSSKYGSVVTNDMGTICSRIVTEKQKHSVVITTHIYHKAKHTKAWCPRPPRAVPYTHSHVTNYMPETGDVTTAIVRRNTITTAGPSDLYVHVGNLIYRNLHLFNSEMHDSILISYSSDLIIYRTNTIGDDYIPNCNCTEATYYCRHKNRYYPIKVTPHDWYEIQESEYYPKHIQYNLLIGEGPCEPGDCGGKLLCRHGVIGIITAGGEGHVAFIDLRQFHCAEEQGITDYIHMLGEAFGNGFVDSVKEQINAINPINNISKKVIKWLLRIISAMVIIIRNSSDPQTIIATLTLIGCNGSPWRFLKEKFCKWTQLTYIHKESDSWLKKFTEMCNAARGLEWIGNKISKFIDWMKSMLPQAQLKVKYLNEIKKLSLLEKQIENLRAADSATQEKIKCEIDTLHDLSCKFLPLYAHEAKRIKVLYNKCSNIIKQRKRSEPVAVMIHGPPGTGKSITTNFLARMITNESDVYSLPPDPKYFDGYDNQSVVIMDDIMQNPDGEDMTLFCQMVSSVTFIPPMADLPDKGKPFDSRFILCSTNHSLLAPPTISSLPAMNRRFFFDLDIVVHDNYKDTQGKLDVSKAFRPCNVNTKIGNAKCCPFVCGKAVXFKDRSTCSTYTLAQVYNHILEEDKRRRQVVDVMSAIFQGPISLDXPPPPAIXDLLQSVRTPEVIKYCQDNKWVIPAECQVERDLNIANSIIAIIANIISIAGIIFVIYKLFCSLQGPYSGEPKPKTKVPERRVVAQGPEEEFGRSILKNNTCVITTGNGKFTGLGIHDRILIIPTHADPGREVQVNGVHTKVLDSYDLYNRDGVKLEITVIQLDRNEKFRDIRKYIPETEDDYPECNLALSANQDEPTIIKVGDVVSYGNILLSGNQTARMLKYNYPTKSGYCGGVLYKIGQILGIHVGGNGRDGFSAMLLRSYFTDTQGQIKVNKHATECGLPTIHTPSKTKLQPSVFYDVFPGSKEPAVLTDNDPRLEVNFKEALFSKYKGNVECNLNEHMEIAIAHYSAQLMTLDIDSRPIALEDSVFGIEGLEALDLNTSAGFPYVTMGIKKRDLINNKTKDISRLKEALDKYGVDLPMITFLKDELRKKEKISTGKTRVIEASSINDTILFRTTFGNLFSKFHLNPGVVTGSAVGCDPETFWSKIPVMLDGDCIMAFDYTNYDGSIHPVWFQALKKVLENLSFQSNLIDRLCYSKHLFKSTYYEVAGGVPSGCSGTSIFNTMINNIIIRTLVLDAYKNIDLDKLKIIAYGDDVIFSYKYTLDMEAIANEGKKYGLTITPADKSNEFKKLDYSNVTFLKRGFKQDERHTFLIHPTFPVEEIHESIRWTKKPSQMQEHVLSLCHLMWHNGRKVYEDFSSKIRSVSAGRALYIPPYDLLKHEWYEKF.

Residue glycine 2 is the site of N-myristoyl glycine; by host attachment. Topologically, residues 2-1470 are cytoplasmic; it reads GAQVSRQNVG…DLNIANSIIA (1469 aa). Residues 567–584 are amphipathic alpha-helix; sequence PIEQNPVENYIDEVLNEV. Residues histidine 875 and aspartate 892 each act as for protease 2A activity in the active site. 2 residues coordinate Zn(2+): cysteine 909 and cysteine 911. Cysteine 963 acts as the For protease 2A activity in catalysis. Residues cysteine 969 and histidine 971 each contribute to the Zn(2+) site. The membrane-binding stretch occupies residues 1095 to 1164; that stretch reads SDSWLKKFTE…NLRAADSATQ (70 aa). The oligomerization stretch occupies residues 1095–1228; the sequence is SDSWLKKFTE…PPGTGKSITT (134 aa). Positions 1116 to 1120 are RNA-binding; that stretch reads GNKIS. Residues 1188-1350 enclose the SF3 helicase domain; the sequence is EAKRIKVLYN…YKDTQGKLDV (163 aa). Zn(2+) is bound by residues cysteine 1357, cysteine 1368, and cysteine 1373. The C4-type; degenerate zinc-finger motif lies at 1357-1373; sequence CNVNTKIGNAKCCPFVC. The RNA-binding stretch occupies residues 1400-1407; it reads EDKRRRQV. The segment at 1411–1416 is oligomerization; it reads MSAIFQ. Residues 1471 to 1486 lie within the membrane without spanning it; sequence IIANIISIAGIIFVIY. At 1487–2157 the chain is on the cytoplasmic side; the sequence is KLFCSLQGPY…LLKHEWYEKF (671 aa). Residue tyrosine 1496 is modified to O-(5'-phospho-RNA)-tyrosine. The Peptidase C3 domain occupies 1515 to 1693; it reads GPEEEFGRSI…FSAMLLRSYF (179 aa). Catalysis depends on for protease 3C activity residues histidine 1554, glutamate 1585, and cysteine 1661. The RdRp catalytic domain occupies 1925-2038; sequence DCIMAFDYTN…SYKYTLDMEA (114 aa). Mg(2+) contacts are provided by aspartate 1931 and aspartate 2024.

The protein belongs to the picornaviruses polyprotein family. As to quaternary structure, interacts with capsid protein VP1 and capsid protein VP3 to form heterotrimeric protomers. In terms of assembly, interacts with capsid protein VP0, and capsid protein VP3 to form heterotrimeric protomers. Five protomers subsequently associate to form pentamers which serve as building blocks for the capsid. Interacts with capsid protein VP2, capsid protein VP3 and capsid protein VP4 following cleavage of capsid protein VP0. Interacts with capsid protein VP1 and capsid protein VP3 in the mature capsid. As to quaternary structure, interacts with capsid protein VP0 and capsid protein VP1 to form heterotrimeric protomers. Five protomers subsequently associate to form pentamers which serve as building blocks for the capsid. Interacts with capsid protein VP4 in the mature capsid. Interacts with protein 2C; this interaction may be important for virion morphogenesis. In terms of assembly, interacts with capsid protein VP1 and capsid protein VP3. Homodimer. As to quaternary structure, homohexamer; forms a hexameric ring structure with 6-fold symmetry characteristic of AAA+ ATPases. Interacts (via N-terminus) with host RTN3 (via reticulon domain); this interaction is important for viral replication. Interacts with capsid protein VP3; this interaction may be important for virion morphogenesis. In terms of assembly, interacts with protein 3CD. Homodimer. Interacts with host GBF1. Interacts (via GOLD domain) with host ACBD3 (via GOLD domain); this interaction allows the formation of a viral protein 3A/ACBD3 heterotetramer with a 2:2 stoichiometry, which will stimulate the recruitment of host PI4KB in order to synthesize PI4P at the viral RNA replication sites. As to quaternary structure, interacts with RNA-directed RNA polymerase. In terms of assembly, interacts with protein 3AB and with RNA-directed RNA polymerase. Interacts with Viral protein genome-linked and with protein 3CD. Mg(2+) is required as a cofactor. Specific enzymatic cleavages in vivo by the viral proteases yield processing intermediates and the mature proteins. Post-translationally, myristoylation is required for the formation of pentamers during virus assembly. Further assembly of 12 pentamers and a molecule of genomic RNA generates the provirion. In terms of processing, during virion maturation, immature virions are rendered infectious following cleavage of VP0 into VP4 and VP2. This maturation seems to be an autocatalytic event triggered by the presence of RNA in the capsid and it is followed by a conformational change infectious virion. Myristoylation is required during RNA encapsidation and formation of the mature virus particle. Post-translationally, VPg is uridylylated by the polymerase into VPg-pUpU. This acts as a nucleotide-peptide primer for the genomic RNA replication.

The protein localises to the virion. It localises to the host cytoplasm. Its subcellular location is the host cytoplasmic vesicle membrane. It is found in the host nucleus. It carries out the reaction a ribonucleoside 5'-triphosphate + H2O = a ribonucleoside 5'-diphosphate + phosphate + H(+). It catalyses the reaction Selective cleavage of Tyr-|-Gly bond in the picornavirus polyprotein.. The catalysed reaction is RNA(n) + a ribonucleoside 5'-triphosphate = RNA(n+1) + diphosphate. The enzyme catalyses Selective cleavage of Gln-|-Gly bond in the poliovirus polyprotein. In other picornavirus reactions Glu may be substituted for Gln, and Ser or Thr for Gly.. Replication or transcription is subject to high level of random mutations by the nucleotide analog ribavirin. In terms of biological role, forms an icosahedral capsid of pseudo T=3 symmetry with capsid proteins VP2 and VP3. The capsid is 300 Angstroms in diameter, composed of 60 copies of each capsid protein and enclosing the viral positive strand RNA genome. Capsid protein VP1 mainly forms the vertices of the capsid. Capsid protein VP1 interacts with host cell receptor to provide virion attachment to target host cells. This attachment induces virion internalization. Tyrosine kinases are probably involved in the entry process. After binding to its receptor, the capsid undergoes conformational changes. Capsid protein VP1 N-terminus (that contains an amphipathic alpha-helix) and capsid protein VP4 are externalized. Together, they shape a pore in the host membrane through which viral genome is translocated to host cell cytoplasm. Functionally, forms an icosahedral capsid of pseudo T=3 symmetry with capsid proteins VP2 and VP3. The capsid is 300 Angstroms in diameter, composed of 60 copies of each capsid protein and enclosing the viral positive strand RNA genome. Lies on the inner surface of the capsid shell. After binding to the host receptor, the capsid undergoes conformational changes. Capsid protein VP4 is released, Capsid protein VP1 N-terminus is externalized, and together, they shape a pore in the host membrane through which the viral genome is translocated into the host cell cytoplasm. Its function is as follows. Component of immature procapsids, which is cleaved into capsid proteins VP4 and VP2 after maturation. Allows the capsid to remain inactive before the maturation step. In terms of biological role, cysteine protease that cleaves viral polyprotein and specific host proteins. It is responsible for the autocatalytic cleavage between the P1 and P2 regions, which is the first cleavage occurring in the polyprotein. Also cleaves the host translation initiation factor EIF4G1, in order to shut down the capped cellular mRNA translation. Inhibits the host nucleus-cytoplasm protein and RNA trafficking by cleaving host members of the nuclear pores. Counteracts stress granule formation probably by antagonizing its assembly or promoting its dissassembly. Functionally, plays an essential role in the virus replication cycle by acting as a viroporin. Creates a pore in the host endoplasmic reticulum and as a consequence releases Ca2+ in the cytoplasm of infected cell. In turn, high levels of cytoplasmic calcium may trigger membrane trafficking and transport of viral ER-associated proteins to viroplasms, sites of viral genome replication. Induces and associates with structural rearrangements of intracellular membranes. Displays RNA-binding, nucleotide binding and NTPase activities. May play a role in virion morphogenesis and viral RNA encapsidation by interacting with the capsid protein VP3. Its function is as follows. Localizes the viral replication complex to the surface of membranous vesicles. Together with protein 3CD binds the Cis-Active RNA Element (CRE) which is involved in RNA synthesis initiation. Acts as a cofactor to stimulate the activity of 3D polymerase, maybe through a nucleid acid chaperone activity. In terms of biological role, localizes the viral replication complex to the surface of membranous vesicles. It inhibits host cell endoplasmic reticulum-to-Golgi apparatus transport and causes the disassembly of the Golgi complex, possibly through GBF1 interaction. This would result in depletion of MHC, trail receptors and IFN receptors at the host cell surface. Plays an essential role in viral RNA replication by recruiting ACBD3 and PI4KB at the viral replication sites, thereby allowing the formation of the rearranged membranous structures where viral replication takes place. Functionally, acts as a primer for viral RNA replication and remains covalently bound to viral genomic RNA. VPg is uridylylated prior to priming replication into VPg-pUpU. The oriI viral genomic sequence may act as a template for this. The VPg-pUpU is then used as primer on the genomic RNA poly(A) by the RNA-dependent RNA polymerase to replicate the viral genome. During genome replication, the VPg-RNA linkage is removed by the host TDP2, thereby accelerating replication. During the late stage of the replication cycle, host TDP2 is excluded from sites of viral RNA synthesis and encapsidation, allowing for the generation of progeny virions. Involved in the viral replication complex and viral polypeptide maturation. It exhibits protease activity with a specificity and catalytic efficiency that is different from protease 3C. Protein 3CD lacks polymerase activity. Protein 3CD binds to the 5'UTR of the viral genome. Its function is as follows. Major viral protease that mediates proteolytic processing of the polyprotein. Cleaves host EIF5B, contributing to host translation shutoff. Also cleaves host PABPC1, contributing to host translation shutoff. In terms of biological role, replicates the viral genomic RNA on the surface of intracellular membranes. May form linear arrays of subunits that propagate along a strong head-to-tail interaction called interface-I. Covalently attaches UMP to a tyrosine of VPg, which is used to prime RNA synthesis. The positive stranded RNA genome is first replicated at virus induced membranous vesicles, creating a dsRNA genomic replication form. This dsRNA is then used as template to synthesize positive stranded RNA genomes. ss(+)RNA genomes are either translated, replicated or encapsidated. The protein is Genome polyprotein of Homo sapiens (Human).